The primary structure comprises 276 residues: 3,4-dihydroxyphenylacetate 2,3-dioxygenase (276 aa).

The cofactor is Fe cation.

The enzyme catalyses 3,4-dihydroxyphenylacetate + O2 = 2-hydroxy-5-carboxymethylmuconate semialdehyde + H(+). The protein operates within aromatic compound metabolism; 4-hydroxyphenylacetate degradation; pyruvate and succinate semialdehyde from 4-hydroxyphenylacetate: step 2/7. Transforms homoprotocatechuic acid (HPC) into 5-carboxymethyl-2-hydroxy-muconic semialdehyde (CHMS). The sequence is that of 3,4-dihydroxyphenylacetate 2,3-dioxygenase (hpcB) from Escherichia coli.